Here is a 314-residue protein sequence, read N- to C-terminus: Ribosomal RNA small subunit methyltransferase H (314 aa).

Residues 37–39 (GGH), D57, F83, D105, and Q112 each bind S-adenosyl-L-methionine.

It belongs to the methyltransferase superfamily. RsmH family.

The protein localises to the cytoplasm. The enzyme catalyses cytidine(1402) in 16S rRNA + S-adenosyl-L-methionine = N(4)-methylcytidine(1402) in 16S rRNA + S-adenosyl-L-homocysteine + H(+). Functionally, specifically methylates the N4 position of cytidine in position 1402 (C1402) of 16S rRNA. This Thioalkalivibrio sulfidiphilus (strain HL-EbGR7) protein is Ribosomal RNA small subunit methyltransferase H.